The following is a 372-amino-acid chain: Maltose/maltodextrin import ATP-binding protein MalK (372 aa).

Residues 4–234 form the ABC transporter domain; that stretch reads VTLKNVCKAY…PQNRFVAGFI (231 aa). Position 36–43 (36–43) interacts with ATP; it reads GPSGCGKS.

This sequence belongs to the ABC transporter superfamily. Maltooligosaccharide importer (TC 3.A.1.1.1) family. In terms of assembly, the complex is composed of two ATP-binding proteins (MalK), two transmembrane proteins (MalG and MalK) and a solute-binding protein (MalE).

The protein resides in the cell inner membrane. It carries out the reaction D-maltose(out) + ATP + H2O = D-maltose(in) + ADP + phosphate + H(+). Functionally, part of the ABC transporter complex MalEFGK involved in maltose/maltodextrin import. Responsible for energy coupling to the transport system. This is Maltose/maltodextrin import ATP-binding protein MalK from Vibrio parahaemolyticus serotype O3:K6 (strain RIMD 2210633).